We begin with the raw amino-acid sequence, 190 residues long: UPF0200 protein TGAM_0868 (190 aa).

7–14 (GMPGSGKS) contacts ATP.

The protein belongs to the UPF0200 family.

The chain is UPF0200 protein TGAM_0868 from Thermococcus gammatolerans (strain DSM 15229 / JCM 11827 / EJ3).